Consider the following 432-residue polypeptide: MLFMVKFRWETEFKETDIGKIPKDWDVKKIKDIGEVAGGSTPSTKIKEYWGGDIPWITPKDLANYEYIYISRGERNITEKAVKECSLRIFPKGTILLTSRAPIGYVAIAKNPLTTNQGFRNIIPKDGVVSEYLYYLFKTKTMSEYLKDISGGSTFPELKGSTLKEVEIPYPSPEEQQKIATVLSYFDDLIENKKKQNEILEKIALELFKNWFIDFEPFKNEEFVYNDELDKEIPKGWEVKRLGDILKVESGSNAPQREIYFENAKIPFVRVKHLVKGVCIESSDFINELALKDYKMKLYNEKSIIFQKSGESLKEARVNIVPFKFTAVNHLAVIDSSMLNEKHYFIYCLLRFLLKEIVYSVKGTTLPYLKISDIENKYIIIPPQPILQKFHSLVQPLFEKIINNQKQIMVLKKIRDALLPKLVFGELRVEEL.

It belongs to the type-I restriction system S methylase family. The type I restriction/modification system is composed of three polypeptides R, M and S.

The specificity (S) subunit of a type I restriction enzyme; this subunit dictates DNA sequence specificity. The M and S subunits together form a methyltransferase (MTase) that methylates A-3 on the top and A-2 on the bottom strand of the sequence 5'-CCAN(5)GTR-3'. In the presence of the R subunit the complex can also act as an endonuclease, binding to the same target sequence but cutting the DNA some distance from this site. Whether the DNA is cut or modified depends on the methylation state of the target sequence. When the target site is unmodified, the DNA is cut. When the target site is hemimethylated, the complex acts as a maintenance MTase modifying the DNA so that both strands become methylated. After locating a non-methylated recognition site, the enzyme complex serves as a molecular motor that translocates DNA in an ATP-dependent manner until a collision occurs that triggers cleavage. The chain is Type I restriction enzyme MjaIX specificity subunit (hsdS) from Methanocaldococcus jannaschii (strain ATCC 43067 / DSM 2661 / JAL-1 / JCM 10045 / NBRC 100440) (Methanococcus jannaschii).